The chain runs to 189 residues: Inosine triphosphate pyrophosphatase (189 aa).

Thr-14 to Lys-19 contacts ITP. Glu-42 is a Mg(2+) binding site. ITP is bound by residues Lys-54, Asp-70–Thr-71, Lys-87, Phe-146–Asp-149, Lys-167, and His-172–Arg-173.

Belongs to the HAM1 NTPase family. As to quaternary structure, homodimer. It depends on Mg(2+) as a cofactor. Mn(2+) serves as cofactor.

It localises to the cytoplasm. The protein localises to the nucleus. The enzyme catalyses ITP + H2O = IMP + diphosphate + H(+). It carries out the reaction dITP + H2O = dIMP + diphosphate + H(+). It catalyses the reaction XTP + H2O = XMP + diphosphate + H(+). Functionally, pyrophosphatase that hydrolyzes non-canonical purine nucleotides such as inosine triphosphate (ITP), deoxyinosine triphosphate (dITP) or xanthosine 5'-triphosphate (XTP) to their respective monophosphate derivatives. The enzyme does not distinguish between the deoxy- and ribose forms. Probably excludes non-canonical purines from RNA and DNA precursor pools, thus preventing their incorporation into RNA and DNA and avoiding chromosomal lesions. This Pyricularia oryzae (strain 70-15 / ATCC MYA-4617 / FGSC 8958) (Rice blast fungus) protein is Inosine triphosphate pyrophosphatase.